A 286-amino-acid chain; its full sequence is MVAVIIKGNEVAEKKRAQLKEEVVKLKEQGIVPGLAVILVGEDPASRSYIKGKQKGCEQVGIYSELIEFPDTITEERLLAEIDRLNEDDRINGILVQLPLPKHIEEKAIIERISPKKDVDGFHPINIGRMMTGQDTFLPCTPHGILELVKETNIDISGKHVVVIGRSNIVGKPVGQLFLNENATVTYCHSKTKNIKELSKLADILVVAVGRPKMVTADYIKEGAVVIDVGVNRLETGKLCGDVDFENVLDIAGYITPVPKGVGPMTITMLLHNTVESAKRAGFICK.

Residues 165-167 (GRS), serine 190, and valine 231 each bind NADP(+).

Belongs to the tetrahydrofolate dehydrogenase/cyclohydrolase family. In terms of assembly, homodimer.

The catalysed reaction is (6R)-5,10-methylene-5,6,7,8-tetrahydrofolate + NADP(+) = (6R)-5,10-methenyltetrahydrofolate + NADPH. It carries out the reaction (6R)-5,10-methenyltetrahydrofolate + H2O = (6R)-10-formyltetrahydrofolate + H(+). Its pathway is one-carbon metabolism; tetrahydrofolate interconversion. In terms of biological role, catalyzes the oxidation of 5,10-methylenetetrahydrofolate to 5,10-methenyltetrahydrofolate and then the hydrolysis of 5,10-methenyltetrahydrofolate to 10-formyltetrahydrofolate. This chain is Bifunctional protein FolD, found in Bacillus cytotoxicus (strain DSM 22905 / CIP 110041 / 391-98 / NVH 391-98).